The chain runs to 274 residues: Orotidine 5'-phosphate decarboxylase (274 aa).

Substrate-binding positions include D40, 62-64, 93-102, Y227, and R245; these read KTH and DRKFIDIGNT. K95 functions as the Proton donor in the catalytic mechanism.

It belongs to the OMP decarboxylase family.

The catalysed reaction is orotidine 5'-phosphate + H(+) = UMP + CO2. It functions in the pathway pyrimidine metabolism; UMP biosynthesis via de novo pathway; UMP from orotate: step 2/2. The chain is Orotidine 5'-phosphate decarboxylase (pyrG) from Emericella nidulans (strain FGSC A4 / ATCC 38163 / CBS 112.46 / NRRL 194 / M139) (Aspergillus nidulans).